An 80-amino-acid polypeptide reads, in one-letter code: Exodeoxyribonuclease 7 small subunit (80 aa).

This sequence belongs to the XseB family. Heterooligomer composed of large and small subunits.

The protein localises to the cytoplasm. The catalysed reaction is Exonucleolytic cleavage in either 5'- to 3'- or 3'- to 5'-direction to yield nucleoside 5'-phosphates.. Its function is as follows. Bidirectionally degrades single-stranded DNA into large acid-insoluble oligonucleotides, which are then degraded further into small acid-soluble oligonucleotides. This Escherichia coli O139:H28 (strain E24377A / ETEC) protein is Exodeoxyribonuclease 7 small subunit.